A 154-amino-acid polypeptide reads, in one-letter code: Nuclear cap-binding protein subunit 2 (154 aa).

MRNA is bound by residues Tyr10, Tyr33, 102 to 106, 113 to 117, and 123 to 124; these read RCDWD, RQYGR, and QV. Positions 30–108 constitute an RRM domain; that stretch reads STLYMGNLSF…RIIRCDWDAG (79 aa).

It belongs to the RRM NCBP2 family. In terms of assembly, component of the nuclear cap-binding complex (CBC), a heterodimer composed of Cbp80 and Cbp20 that interacts with m7GpppG-capped RNA.

Its subcellular location is the nucleus. In terms of biological role, component of the cap-binding complex (CBC), which binds co-transcriptionally to the 5' cap of pre-mRNAs and is involved in various processes such as pre-mRNA splicing and RNA-mediated gene silencing (RNAi). The CBC complex is involved in miRNA-mediated RNA interference and is required for primary microRNAs (miRNAs) processing. Also involved in innate immunity via the short interfering RNAs (siRNAs) processing machinery by restricting the viral RNA production. In the CBC complex, Cbp20 recognizes and binds capped RNAs (m7GpppG-capped RNA) but requires Cbp80 to stabilize the movement of its N-terminal loop and lock the CBC into a high affinity cap-binding state with the cap structure. The polypeptide is Nuclear cap-binding protein subunit 2 (Bombyx mori (Silk moth)).